We begin with the raw amino-acid sequence, 421 residues long: 3-isopropylmalate dehydratase large subunit (421 aa).

3 residues coordinate [4Fe-4S] cluster: Cys300, Cys360, and Cys363.

The protein belongs to the aconitase/IPM isomerase family. LeuC type 2 subfamily. As to quaternary structure, heterodimer of LeuC and LeuD. The cofactor is [4Fe-4S] cluster.

The catalysed reaction is (2R,3S)-3-isopropylmalate = (2S)-2-isopropylmalate. It participates in amino-acid biosynthesis; L-leucine biosynthesis; L-leucine from 3-methyl-2-oxobutanoate: step 2/4. Functionally, catalyzes the isomerization between 2-isopropylmalate and 3-isopropylmalate, via the formation of 2-isopropylmaleate. This chain is 3-isopropylmalate dehydratase large subunit, found in Lachnoclostridium phytofermentans (strain ATCC 700394 / DSM 18823 / ISDg) (Clostridium phytofermentans).